We begin with the raw amino-acid sequence, 329 residues long: GDP-mannose transporter (329 aa).

Residues 1 to 11 lie on the Cytoplasmic side of the membrane; that stretch reads MADKGSVAAKS. A helical transmembrane segment spans residues 12–32; it reads LTNSAPLSIFSYCAASILMTV. At 33 to 40 the chain is on the lumenal side; the sequence is TNKYAVSG. A helical membrane pass occupies residues 41–61; sequence VDFNFNFFLLAVQGIVCITLI. Topologically, residues 62 to 83 are cytoplasmic; it reads SSLKQLNVITFREFNKVEAKKW. A helical transmembrane segment spans residues 84–104; that stretch reads FPIAVLLVVMIYTSSKALQYL. The Lumenal segment spans residues 105–107; sequence SIP. The chain crosses the membrane as a helical span at residues 108 to 128; the sequence is IYTIFKNLTIILIAYGEVIWF. At 129–131 the chain is on the cytoplasmic side; that stretch reads GGR. A helical membrane pass occupies residues 132 to 152; that stretch reads VTNLALGSFVLMVLSSAVASY. Residues 153 to 163 lie on the Lumenal side of the membrane; it reads GDSNVDTGKLN. A helical membrane pass occupies residues 164–184; the sequence is FNIGYFWMFTNCFSSAAFVLF. Over 185 to 196 the chain is Cytoplasmic; the sequence is MRKRIKLTNFKD. The helical transmembrane segment at 197–217 threads the bilayer; the sequence is FDTMYYNNLLSIPILLFASLT. Residues 218–237 are Lumenal-facing; it reads TEDWSAKNIAQNFPEDTKYA. Residues 238-258 form a helical membrane-spanning segment; the sequence is VIASMIISGMSAVGISYTSAW. Topologically, residues 259 to 266 are cytoplasmic; sequence CVRVTSST. The chain crosses the membrane as a helical span at residues 267 to 287; sequence TYSMVGALNKLPIALSGLLFF. Residues 288 to 290 are Lumenal-facing; sequence KAP. Residues 291-311 traverse the membrane as a helical segment; it reads INFYSISSIFIGFAAGLVYAI. Over 312–329 the chain is Cytoplasmic; sequence AKQKQKKEDELQLPTDKS.

It belongs to the TPT transporter family. SLC35D subfamily. In terms of assembly, homooligomer.

The protein localises to the golgi apparatus membrane. The protein resides in the cytoplasmic vesicle membrane. It localises to the endoplasmic reticulum membrane. Functionally, involved in the import of GDP-mannose from the cytoplasm into the Golgi lumen. The polypeptide is GDP-mannose transporter (VIG4) (Komagataella pastoris (Yeast)).